Reading from the N-terminus, the 456-residue chain is Bifunctional protein GlmU (456 aa).

The tract at residues 1 to 229 is pyrophosphorylase; sequence MLNNAMSVVI…LSEVEGVNNR (229 aa). UDP-N-acetyl-alpha-D-glucosamine contacts are provided by residues 11–14, lysine 25, glutamine 76, 81–82, 103–105, glycine 140, glutamate 154, asparagine 169, and asparagine 227; these read LAAG, GT, and YGD. Aspartate 105 serves as a coordination point for Mg(2+). Asparagine 227 contacts Mg(2+). Residues 230-250 form a linker region; it reads LQLSRLERVYQSEQAEKLLLA. An N-acetyltransferase region spans residues 251–456; sequence GVMLRDPARF…EGWRRPVKKK (206 aa). Residues arginine 333 and lysine 351 each contribute to the UDP-N-acetyl-alpha-D-glucosamine site. Histidine 363 functions as the Proton acceptor in the catalytic mechanism. Residues tyrosine 366 and asparagine 377 each contribute to the UDP-N-acetyl-alpha-D-glucosamine site. Acetyl-CoA-binding positions include alanine 380, 386-387, serine 405, alanine 423, and arginine 440; that span reads NY.

In the N-terminal section; belongs to the N-acetylglucosamine-1-phosphate uridyltransferase family. This sequence in the C-terminal section; belongs to the transferase hexapeptide repeat family. Homotrimer. The cofactor is Mg(2+).

It localises to the cytoplasm. The catalysed reaction is alpha-D-glucosamine 1-phosphate + acetyl-CoA = N-acetyl-alpha-D-glucosamine 1-phosphate + CoA + H(+). The enzyme catalyses N-acetyl-alpha-D-glucosamine 1-phosphate + UTP + H(+) = UDP-N-acetyl-alpha-D-glucosamine + diphosphate. It functions in the pathway nucleotide-sugar biosynthesis; UDP-N-acetyl-alpha-D-glucosamine biosynthesis; N-acetyl-alpha-D-glucosamine 1-phosphate from alpha-D-glucosamine 6-phosphate (route II): step 2/2. The protein operates within nucleotide-sugar biosynthesis; UDP-N-acetyl-alpha-D-glucosamine biosynthesis; UDP-N-acetyl-alpha-D-glucosamine from N-acetyl-alpha-D-glucosamine 1-phosphate: step 1/1. Its pathway is bacterial outer membrane biogenesis; LPS lipid A biosynthesis. Catalyzes the last two sequential reactions in the de novo biosynthetic pathway for UDP-N-acetylglucosamine (UDP-GlcNAc). The C-terminal domain catalyzes the transfer of acetyl group from acetyl coenzyme A to glucosamine-1-phosphate (GlcN-1-P) to produce N-acetylglucosamine-1-phosphate (GlcNAc-1-P), which is converted into UDP-GlcNAc by the transfer of uridine 5-monophosphate (from uridine 5-triphosphate), a reaction catalyzed by the N-terminal domain. This is Bifunctional protein GlmU from Escherichia coli O6:K15:H31 (strain 536 / UPEC).